A 652-amino-acid chain; its full sequence is DNA ligase (652 aa).

NAD(+) contacts are provided by residues 29–33, 78–79, and Glu-107; these read DSQYD and SL. The N6-AMP-lysine intermediate role is filled by Lys-109. NAD(+) is bound by residues Arg-130, Glu-164, Lys-278, and Lys-302. Cys-395, Cys-398, Cys-413, and Cys-418 together coordinate Zn(2+). The region spanning 577–652 is the BRCT domain; sequence STDAQLSGLT…IQDEDWLLNL (76 aa).

This sequence belongs to the NAD-dependent DNA ligase family. LigA subfamily. The cofactor is Mg(2+). Requires Mn(2+) as cofactor.

The catalysed reaction is NAD(+) + (deoxyribonucleotide)n-3'-hydroxyl + 5'-phospho-(deoxyribonucleotide)m = (deoxyribonucleotide)n+m + AMP + beta-nicotinamide D-nucleotide.. Its function is as follows. DNA ligase that catalyzes the formation of phosphodiester linkages between 5'-phosphoryl and 3'-hydroxyl groups in double-stranded DNA using NAD as a coenzyme and as the energy source for the reaction. It is essential for DNA replication and repair of damaged DNA. The sequence is that of DNA ligase from Streptococcus agalactiae serotype V (strain ATCC BAA-611 / 2603 V/R).